The sequence spans 225 residues: PKHD-type hydroxylase YbiX (225 aa).

The 100-residue stretch at 78–177 (TLSTPLFNRY…RVASFMWIQS (100 aa)) folds into the Fe2OG dioxygenase domain. Positions 96, 98, and 158 each coordinate Fe cation. Position 168 (R168) interacts with 2-oxoglutarate.

It depends on Fe(2+) as a cofactor. L-ascorbate is required as a cofactor.

This chain is PKHD-type hydroxylase YbiX, found in Shigella boydii serotype 18 (strain CDC 3083-94 / BS512).